We begin with the raw amino-acid sequence, 139 residues long: Large ribosomal subunit protein uL16 (139 aa).

Positions 1–16 are enriched in basic residues; that stretch reads MLIPKRTKYRKQHRPD. Positions 1–23 are disordered; the sequence is MLIPKRTKYRKQHRPDRHGMSKG.

This sequence belongs to the universal ribosomal protein uL16 family. In terms of assembly, part of the 50S ribosomal subunit.

Binds 23S rRNA and is also seen to make contacts with the A and possibly P site tRNAs. The protein is Large ribosomal subunit protein uL16 of Bifidobacterium animalis subsp. lactis (strain AD011).